A 480-amino-acid polypeptide reads, in one-letter code: Chromosomal replication initiator protein DnaA (480 aa).

A domain I, interacts with DnaA modulators region spans residues 1–71 (MKEFWQTCVS…EALAAEWYQR (71 aa)). Residues 71-142 (RPVQVTFELP…DAANIVYERS (72 aa)) form a domain II region. A domain III, AAA+ region region spans residues 143 to 359 (RLNTDLTFEN…GALRKVLAYA (217 aa)). Residues Gly-187, Gly-189, Lys-190, and Thr-191 each coordinate ATP. Residues 360–480 (RFHGRDVLTV…LHVLEQTLKG (121 aa)) are domain IV, binds dsDNA.

This sequence belongs to the DnaA family. As to quaternary structure, oligomerizes as a right-handed, spiral filament on DNA at oriC.

The protein localises to the cytoplasm. Plays an essential role in the initiation and regulation of chromosomal replication. ATP-DnaA binds to the origin of replication (oriC) to initiate formation of the DNA replication initiation complex once per cell cycle. Binds the DnaA box (a 9 base pair repeat at the origin) and separates the double-stranded (ds)DNA. Forms a right-handed helical filament on oriC DNA; dsDNA binds to the exterior of the filament while single-stranded (ss)DNA is stabiized in the filament's interior. The ATP-DnaA-oriC complex binds and stabilizes one strand of the AT-rich DNA unwinding element (DUE), permitting loading of DNA polymerase. After initiation quickly degrades to an ADP-DnaA complex that is not apt for DNA replication. Binds acidic phospholipids. The polypeptide is Chromosomal replication initiator protein DnaA (Bordetella bronchiseptica (strain ATCC BAA-588 / NCTC 13252 / RB50) (Alcaligenes bronchisepticus)).